The following is a 412-amino-acid chain: Probable tRNA pseudouridine synthase D (412 aa).

Aspartate 97 serves as the catalytic Nucleophile. Positions 167–370 constitute a TRUD domain; it reads ALPNYYGYQR…YGSYRRARLQ (204 aa).

This sequence belongs to the pseudouridine synthase TruD family.

The enzyme catalyses uridine(13) in tRNA = pseudouridine(13) in tRNA. Could be responsible for synthesis of pseudouridine from uracil-13 in transfer RNAs. The polypeptide is Probable tRNA pseudouridine synthase D (Pyrobaculum neutrophilum (strain DSM 2338 / JCM 9278 / NBRC 100436 / V24Sta) (Thermoproteus neutrophilus)).